A 706-amino-acid polypeptide reads, in one-letter code: Parasporal crystal protein Cry18Aa (706 aa).

The protein belongs to the delta endotoxin family.

In terms of biological role, binds to the brush border membrane vesicles of scarab larvae and somehow damages the gut wall to allow the vegetative cells of P.popilliae to enter the hemolymph. Active on M.melolontha. The polypeptide is Parasporal crystal protein Cry18Aa (cry18Aa) (Paenibacillus popilliae (Bacillus popilliae)).